The chain runs to 385 residues: MKKTLLAAALLAGFAGAAQAETSVTLYGIIDTGIGYNDVDFKVKGANADDSDFKYNHSRFGMINGVQNGSRWGLRGTEDLGDGLQAVFQLESGFNSGNGNSAQDGRLFGRQATIGLQSESWGRLDFGRQTNIASKYFGSIDPFGAGFGQANIGMGMSAMNTVRYDNMVMYQTPSYSGFQFGIGYSFSANDKDADAVNRVGFATADNVRAITTGLRYVNGPLNVALSYDQLNASNNQAQGEVDATPRSYGLGGSYDFEVVKLALAYARTTDGWFGGQGYPVAVTLPSGDKFGGFGVNTFADGFKANSYMVGLSAPIGGASNVFGSWQMVDPKLTGGDEKMNVFSLGYTYDLSKRTNLYAYGSYAKNFAFLEDAKSTAVGVGIRHRF.

The N-terminal stretch at 1–20 (MKKTLLAAALLAGFAGAAQA) is a signal peptide.

This sequence to bacterial outer membrane proteins and porins. As to quaternary structure, homotrimer.

It is found in the cell outer membrane. Its function is as follows. Forms anion selective channels. The protein is Outer membrane porin protein BP0840 of Bordetella pertussis (strain Tohama I / ATCC BAA-589 / NCTC 13251).